Here is a 379-residue protein sequence, read N- to C-terminus: Stimulator of interferon genes protein (379 aa).

At 1–17 (MPYSNLHPSIPRPRSYR) the chain is on the cytoplasmic side. The segment at 1–190 (MPYSNLHPSI…MFNQLHNNML (190 aa)) is mediates interaction with ZDHHC1 and ZDHHC11. Residues 18-34 (FKLAAFVLLVGSLMSLW) form a helical membrane-spanning segment. Over 35 to 44 (MTGEPPSHTL) the chain is Lumenal. The helical transmembrane segment at 45 to 69 (HYLALHVASQQLGLLLKKLCCLAEE) threads the bilayer. Over 70–91 (LCHVQSRYQGSYWKAVRACVGS) the chain is Cytoplasmic. The S-palmitoyl cysteine moiety is linked to residue cysteine 88. A helical membrane pass occupies residues 92 to 106 (PICFMALILLSFYFY). Residues 107–116 (CSLENTSDLR) are Lumenal-facing. The chain crosses the membrane as a helical span at residues 117 to 134 (LAWHLGILVLSKSLSMTL). Residues 135 to 379 (DLQSLAPAEV…QPLPLRTDLI (245 aa)) lie on the Cytoplasmic side of the membrane. A Glycyl lysine isopeptide (Lys-Gly) (interchain with G-Cter in ubiquitin) cross-link involves residue lysine 151. A cyclic dinucleotide-binding domain (CBD) region spans residues 153-340 (FNVAHGLAWS…RHIRQEEKEE (188 aa)). 162 to 167 (SYYIGY) contacts 2',3'-cGAMP. A 3',3'-c-di-GMP-binding site is contributed by glycine 166. Tyrosine 167 is a 2',3'-cUAMP binding site. Lysine 236 participates in a covalent cross-link: Glycyl lysine isopeptide (Lys-Gly) (interchain with G-Cter in ubiquitin). Residue arginine 238 coordinates 2',3'-cUAMP. 2',3'-cGAMP is bound by residues 238-241 (RAYS) and threonine 263. 3',3'-c-di-GMP contacts are provided by residues 238-241 (RAYS) and threonine 263. Position 241 is a phosphoserine (serine 241). 2',3'-cUAMP is bound at residue threonine 263. Residue lysine 338 forms a Glycyl lysine isopeptide (Lys-Gly) (interchain with G-Cter in SUMO) linkage. Residues 340–379 (EVTMSGPPTSVAPRPSLLSQEPRLLISGMEQPLPLRTDLI) are C-terminal tail (CTT). At serine 355 the chain carries Phosphoserine. Phosphoserine; by TBK1 is present on residues serine 358 and serine 366. Positions 363–366 (LLIS) match the pLxIS motif motif.

Belongs to the STING family. Homodimer; forms a homodimer in absence of cyclic nucleotide (c-di-GMP or cGAMP); 'Lys-63'-linked ubiquitination at Lys-151 is required for homodimerization. Homotetramer; in presence of cyclic nucleotide (c-di-GMP or cGAMP), forms tetramers and higher-order oligomers through side-by-side packing. Interacts (when phosphorylated) with IRF3; following activation and phosphorylation on the pLxIS motif by TBK1, recruits IRF3. Interacts with RIGI, MAVS and SSR2. Interacts with RNF5 and TRIM56. Interacts with TBK1; when homodimer, leading to subsequent production of IFN-beta. Interacts with IFIT1 and IFIT2. Interacts with TRIM29; this interaction induces STING1 ubiquitination and subsequent degradation. Associates with the MHC-II complex. Interacts with STEEP1; interaction takes place upon cGAMP-activation and STING1 phosphorylation by MAP3K7/TAK1 and promotes STING1 translocation to COPII vesicles. Interacts with SEC24A, SEC24B and SEC24C; promoting translocation to COPII vesicles. Interacts (when ubiquitinated) with SQSTM1; leading to relocalization to autophagosomes. Interacts with SURF4. Interacts with HNRNPA2B1. Interacts with ZDHHC1; ZDHHC1 constitutively interacts with STING1 and in presence of DNA viruses activates it by promoting its cGAMP-induced oligomerization and the recruitment of downstream signaling components. Interacts with ZDHHC11; in presence of DNA viruses promotes the recruitment of IRF3 to STING1. Interacts with TOMM70. Interacts with TAB1; promoting recruitment of TAB1 to the endoplasmic reticulum membrane and subsequent activation of MAP3K7/TAK1. Interacts (via transmembrane domain) with TMEM203. Interacts with DDX41. Phosphorylation by TBK1 leads to activation and production of IFN-beta. Following cyclic nucleotide (c-di-GMP or cGAMP)-binding, activation and translocation from the endoplasmic reticulum, STING1 is phosphorylated by TBK1 at Ser-366 in the pLxIS motif. The phosphorylated pLxIS motif constitutes an IRF3-binding motif, leading to recruitment of the transcription factor IRF3 to induce type-I interferons and other cytokines. Phosphorylated on tyrosine residues upon MHC-II aggregation. Dephosphorylation by PPP6C leads to inactivation and decreased production of IFN-beta. Phosphorylation at Ser-358 is also required to activate IRF3. Phosphorylation at Ser-355 by MAP3K7/TAK1 facilitates its interaction with STEEP1, promoting STING1 translocation to COPII vesicles. In terms of processing, ubiquitinated. Ubiquitinated via 'Lys-63'-linked ubiquitin chains in response to double-stranded DNA treatment, leading to relocalization to autophagosomes and subsequent degradation; this process is dependent on SQSTM1. 'Lys-63'-linked ubiquitination mediated by TRIM56 at Lys-151 promotes homodimerization and recruitment of the antiviral kinase TBK1 and subsequent production of IFN-beta. 'Lys-48'-linked polyubiquitination at Lys-151 occurring after viral infection is mediated by RNF5 and leads to proteasomal degradation. 'Lys-11'-linked polyubiquitination at Lys-151 by RNF26 leads to stabilize STING1: it protects STING1 from RNF5-mediated 'Lys-48'-linked polyubiquitination. 'Lys-33'-linked and 'Lys-48'-linked deubiquitinated by USP20; leading to its stabilization and promotion of innate antiviral response. 'Lys-48'-linked deubiquitinated by USP44; leading to its stabilization and promotion of innate antiviral response. Deubiquitinated by USP13; leading to inhibition of innate antiviral response. 'Lys-63'-linked deubiquitinated by USP49; leading to inhibition of the subsequent recruitment of TBK1 to the signaling complex. 'Lys-63'-linked ubiquitination mediated by RNF39 promotes the activation of the cGAS-STING pathway. Post-translationally, sumoylated at Lys-338 by TRIM38 during the early phase of viral infection, promoting its stability by preventing its relocalization to autophagosomes and subsequent degradation. Desumoylated by SENP2 during the late phase of viral infection. Palmitoylation takes place in the Golgi apparatus and creates a platform for the recruitment of TBK1.

Its subcellular location is the endoplasmic reticulum membrane. The protein localises to the cytoplasm. The protein resides in the perinuclear region. It is found in the endoplasmic reticulum-Golgi intermediate compartment membrane. It localises to the golgi apparatus membrane. Its subcellular location is the cytoplasmic vesicle. The protein localises to the autophagosome membrane. The protein resides in the mitochondrion outer membrane. It is found in the cell membrane. It carries out the reaction H(+)(in) = H(+)(out). Its activity is regulated as follows. In contrast to mouse protein, not activated by anticancer molecule 5,6-dimethylxanthenone 4-acetic acid (DMXAA). Its function is as follows. Facilitator of innate immune signaling that acts as a sensor of cytosolic DNA from bacteria and viruses and promotes the production of type I interferon (IFN-alpha and IFN-beta). Innate immune response is triggered in response to non-CpG double-stranded DNA from viruses and bacteria delivered to the cytoplasm. Acts by binding cyclic dinucleotides: recognizes and binds cyclic di-GMP (c-di-GMP), a second messenger produced by bacteria, cyclic UMP-AMP (2',3'-cUAMP), and cyclic GMP-AMP (cGAMP), a messenger produced by CGAS in response to DNA virus in the cytosol. Upon binding to c-di-GMP, cUAMP or cGAMP, STING1 oligomerizes, translocates from the endoplasmic reticulum and is phosphorylated by TBK1 on the pLxIS motif, leading to recruitment and subsequent activation of the transcription factor IRF3 to induce expression of type I interferon and exert a potent anti-viral state. Exhibits 2',3' phosphodiester linkage-specific ligand recognition: can bind both 2'-3' linked cGAMP (2'-3'-cGAMP) and 3'-3' linked cGAMP but is preferentially activated by 2'-3' linked cGAMP. The preference for 2'-3'-cGAMP, compared to other linkage isomers is probably due to the ligand itself, whichs adopts an organized free-ligand conformation that resembles the STING1-bound conformation and pays low energy costs in changing into the active conformation. In addition to promote the production of type I interferons, plays a direct role in autophagy. Following cGAMP-binding, STING1 buds from the endoplasmic reticulum into COPII vesicles, which then form the endoplasmic reticulum-Golgi intermediate compartment (ERGIC). The ERGIC serves as the membrane source for WIPI2 recruitment and LC3 lipidation, leading to formation of autophagosomes that target cytosolic DNA or DNA viruses for degradation by the lysosome. Promotes autophagy by acting as a proton channel that directs proton efflux from the Golgi to facilitate MAP1LC3B/LC3B lipidation. The autophagy- and interferon-inducing activities can be uncoupled and autophagy induction is independent of TBK1 phosphorylation. Autophagy is also triggered upon infection by bacteria: following c-di-GMP-binding, which is produced by live Gram-positive bacteria, promotes reticulophagy. May be involved in translocon function, the translocon possibly being able to influence the induction of type I interferons. May be involved in transduction of apoptotic signals via its association with the major histocompatibility complex class II (MHC-II). In Rattus norvegicus (Rat), this protein is Stimulator of interferon genes protein.